We begin with the raw amino-acid sequence, 137 residues long: Small ribosomal subunit protein uS9c (137 aa).

Positions 106 to 137 (KSEGYLTRDPRVKERKKYGLKKARKAPQFSKR) are disordered. Positions 118–137 (KERKKYGLKKARKAPQFSKR) are enriched in basic residues.

Belongs to the universal ribosomal protein uS9 family.

It localises to the plastid. The protein resides in the chloroplast. This is Small ribosomal subunit protein uS9c (rps9) from Pyropia yezoensis (Susabi-nori).